A 62-amino-acid polypeptide reads, in one-letter code: Sperm protamine P1 (62 aa).

The tract at residues 1–46 (MARCRRHSRSRSRSRNQCQRRRRRHYNRRRTYRRSRRHSRRRRVRR) is disordered.

This sequence belongs to the protamine P1 family. In terms of tissue distribution, testis.

Its subcellular location is the nucleus. The protein resides in the chromosome. Protamines substitute for histones in the chromatin of sperm during the haploid phase of spermatogenesis. They compact sperm DNA into a highly condensed, stable and inactive complex. The sequence is that of Sperm protamine P1 (PRM1) from Planigale gilesi (Flat-skulled marsupial mouse).